Here is a 311-residue protein sequence, read N- to C-terminus: Transcription factor MafB (311 aa).

2 disordered regions span residues 35–78 and 150–199; these read PLGR…PTEQ and EDLA…EDRF. Residues 54 to 76 are compositionally biased toward low complexity; sequence SVSSTPISTPCSSVPSSPSFSPT. Positions 157–167 are enriched in basic residues; sequence HPHHHHHHHHQ. Over residues 168-194 the composition is skewed to low complexity; sequence ASPTPSTSSSSSQQLQTSHQQHPPSSS. The tract at residues 226 to 251 is basic motif; that stretch reads RLKQKRRTLKNRGYAQSCRYKRVQQK. In terms of domain architecture, bZIP spans 226-289; that stretch reads RLKQKRRTLK…DAYKLKCEKL (64 aa). Residues 254–275 are leucine-zipper; that stretch reads LENEKTQLIQQVEQLKQEVTRL.

The protein belongs to the bZIP family. Maf subfamily. In terms of assembly, homodimer or heterodimer with other bHLH-Zip transcription factors. Binds DNA as a homodimer or heterodimer. Self-associates; the interaction requires the intact MAFB leucine-zipper domain. Interacts with FOS, HOXD12 and PRRX1. In terms of tissue distribution, expressed in brain, thymus, gut, lung, mesenterium, spleen, kidney, ovary and bursa.

The protein localises to the nucleus. Its function is as follows. Acts as a transcriptional activator or repressor. Positively regulates the expression of alpha-A crystallin genes during lens fiber cell differentiation. Binds to Maf recognition elements (MARE). The sequence is that of Transcription factor MafB (MAFB) from Gallus gallus (Chicken).